The sequence spans 294 residues: Protein CHLOROPLAST J-LIKE DOMAIN 1, chloroplastic (294 aa).

The N-terminal 58 residues, 1–58, are a transit peptide targeting the chloroplast; it reads MAPALSTSCSSVMAFSTSNALRYHHPQISLRNSLRAPKSPSFVRLPLGKVLQSRIVIR. At 59 to 164 the chain is on the stromal side; sequence AASSAAGNPQ…GPRFSRSSKN (106 aa). The tract at residues 74 to 152 is J-like domain; sequence NPYEVLGVNP…IKYADKQPII (79 aa). The helical transmembrane segment at 165–182 threads the bilayer; it reads DMLINLAISVVFSAWIAI. Over 183–233 the chain is Chloroplast intermembrane; sequence KRNVEYKPLQFMSFVFVYRIFEKLKSFEAPSSPIYNEEGEESGRGLRMGKR. Residues 234-256 traverse the membrane as a helical segment; sequence LLRSLSLVFGSILLASLAYTGFL. The Stromal segment spans residues 257 to 275; the sequence is NGIEYMGYSIPMVLYNNQE. The chain crosses the membrane as a helical span at residues 276–293; that stretch reads LIVTASSAFMLYVIASFY. A topological domain (chloroplast intermembrane) is located at residue R294.

In terms of assembly, interacts (via J-like domain) with ARC6 (via J domain).

It is found in the plastid. The protein resides in the chloroplast inner membrane. In terms of biological role, probably involved in the regulation of the fatty acid metabolic process in chloroplasts, especially chloroplastic galactolipids monogalactosyldiacylglycerol (MGDG) and digalactosyldiacylglycerol (DGDG). The polypeptide is Protein CHLOROPLAST J-LIKE DOMAIN 1, chloroplastic (Arabidopsis thaliana (Mouse-ear cress)).